The chain runs to 842 residues: Ionotropic receptor 21a (842 aa).

The signal sequence occupies residues 1 to 15; the sequence is MSYYWVALVLFTAQA. N325 carries N-linked (GlcNAc...) asparagine glycosylation. 2 helical membrane-spanning segments follow: residues 405–425 and 437–457; these read WPVW…IVFT and WGEV…AFSF. N469 carries N-linked (GlcNAc...) asparagine glycosylation. The chain crosses the membrane as a helical span at residues 479–499; the sequence is WLFTIIITSCYTGSIIAFVTL. N-linked (GlcNAc...) asparagine glycosylation is found at N533, N558, N583, and N588. A helical membrane pass occupies residues 680–700; it reads MFLLMALGYFLGATALVSEIV. A disordered region spans residues 722 to 745; it reads WSSASSGSMLRTNAEQLSHDKRKA. Residues N765 and N797 are each glycosylated (N-linked (GlcNAc...) asparagine).

The protein belongs to the glutamate-gated ion channel (TC 1.A.10.1) family. In terms of tissue distribution, expressed in the dorsal organ cool cells. In the antenna, expressed in approximately six neurons in the arista as well as five to ten neurons near the third chamber of the sacculus.

Its subcellular location is the cell membrane. Its function is as follows. Integral part of a neural sensory system in the antenna that provides the neural basis for the response to environmental changes in temperature (thermosensation). Together with Ir25a and Ir93a, mediates the response of the dorsal organ cool cells, a trio of cool-responsive neurons, to cooling and is required for cool avoidance behavior. This is Ionotropic receptor 21a from Drosophila melanogaster (Fruit fly).